The following is a 2628-amino-acid chain: Hemagglutinin A (2628 aa).

The first 24 residues, 1–24 (MRKLNSLFSLAVLLSLLCWGQTAA), serve as a signal peptide directing secretion. Peptidase C25-like regions lie at residues 25 to 539 (AQGG…TPPP), 540 to 995 (GGTS…TPPP), 996 to 1451 (GGTS…TPPP), 1452 to 1907 (GGTS…TPPP), and 2074 to 2628 (IDAD…LAVK). Disordered stretches follow at residues 493–512 (WDAP…LSES), 520–546 (SWKT…SFAG), 944–1002 (KWDA…SFAG), 1400–1458 (KWDA…SFAG), 1856–1881 (KWDA…SESF), 1890–1909 (KTID…PPGG), and 2336–2358 (SSWK…PPGG). Residues 496-508 (PNGTPNPNPGTTT) are compositionally biased toward low complexity.

This sequence belongs to the peptidase C25 family.

In terms of biological role, agglutinates erythrocytes. This is Hemagglutinin A (hagA) from Porphyromonas gingivalis (Bacteroides gingivalis).